Consider the following 275-residue polypeptide: 4-hydroxy-3-methylbut-2-enyl diphosphate reductase (275 aa).

C12 lines the [4Fe-4S] cluster pocket. Residues H36 and H70 each coordinate (2E)-4-hydroxy-3-methylbut-2-enyl diphosphate. Dimethylallyl diphosphate-binding residues include H36 and H70. Residues H36 and H70 each contribute to the isopentenyl diphosphate site. C92 lines the [4Fe-4S] cluster pocket. (2E)-4-hydroxy-3-methylbut-2-enyl diphosphate is bound at residue H120. H120 contacts dimethylallyl diphosphate. An isopentenyl diphosphate-binding site is contributed by H120. The active-site Proton donor is E122. Residue T157 participates in (2E)-4-hydroxy-3-methylbut-2-enyl diphosphate binding. A [4Fe-4S] cluster-binding site is contributed by C185. (2E)-4-hydroxy-3-methylbut-2-enyl diphosphate is bound by residues S213, S214, N215, and S257. 4 residues coordinate dimethylallyl diphosphate: S213, S214, N215, and S257. S213, S214, N215, and S257 together coordinate isopentenyl diphosphate.

The protein belongs to the IspH family. [4Fe-4S] cluster is required as a cofactor.

The enzyme catalyses isopentenyl diphosphate + 2 oxidized [2Fe-2S]-[ferredoxin] + H2O = (2E)-4-hydroxy-3-methylbut-2-enyl diphosphate + 2 reduced [2Fe-2S]-[ferredoxin] + 2 H(+). It catalyses the reaction dimethylallyl diphosphate + 2 oxidized [2Fe-2S]-[ferredoxin] + H2O = (2E)-4-hydroxy-3-methylbut-2-enyl diphosphate + 2 reduced [2Fe-2S]-[ferredoxin] + 2 H(+). Its pathway is isoprenoid biosynthesis; dimethylallyl diphosphate biosynthesis; dimethylallyl diphosphate from (2E)-4-hydroxy-3-methylbutenyl diphosphate: step 1/1. It functions in the pathway isoprenoid biosynthesis; isopentenyl diphosphate biosynthesis via DXP pathway; isopentenyl diphosphate from 1-deoxy-D-xylulose 5-phosphate: step 6/6. Functionally, catalyzes the conversion of 1-hydroxy-2-methyl-2-(E)-butenyl 4-diphosphate (HMBPP) into a mixture of isopentenyl diphosphate (IPP) and dimethylallyl diphosphate (DMAPP). Acts in the terminal step of the DOXP/MEP pathway for isoprenoid precursor biosynthesis. The polypeptide is 4-hydroxy-3-methylbut-2-enyl diphosphate reductase (Nitratiruptor sp. (strain SB155-2)).